A 142-amino-acid polypeptide reads, in one-letter code: MSLMKNERAIIMSMWEKMAAQAEPIGTETLERLFCSYPQTKTYFPHFDLHHGSQQLRAHGFKIMTAVGDAVKSIDNLSSALTKLSELHAYILRVDPVNFKLLSHCLLVTMAARFPADFTPEVHEAWDKFMSILSSILTEKYR.

At S2 the chain carries N-acetylserine. Positions 2–142 constitute a Globin domain; that stretch reads SLMKNERAII…LSSILTEKYR (141 aa). Phosphothreonine is present on T29. S53 is subject to Phosphoserine. H59 serves as a coordination point for heme b. Phosphoserine is present on S73. H88 contributes to the heme b binding site.

It belongs to the globin family. In terms of assembly, heterotetramer of two zeta chains and beta-type chains.

The zeta chain is an alpha-type chain of mammalian embryonic hemoglobin. The sequence is that of Hemoglobin subunit zeta (Hbz) from Mus musculus (Mouse).